We begin with the raw amino-acid sequence, 299 residues long: uncharacterized protein (299 aa).

Residues 1 to 20 (MTTKHELVINTNEPSAPNAD) form a disordered region. The chain crosses the membrane as a helical span at residues 172 to 192 (SFFIPPMVVISTPICLGLTVF).

It belongs to the IIV-6 259R family.

The protein resides in the membrane. This is an uncharacterized protein from Acheta domesticus (House cricket).